Consider the following 238-residue polypeptide: Ribosomal RNA small subunit methyltransferase G (238 aa).

Residues glycine 78, phenylalanine 83, 129-130 (AE), and arginine 148 contribute to the S-adenosyl-L-methionine site. The tract at residues 216-238 (EKKKETPKKYPRKAGTPAKNPIK) is disordered.

Belongs to the methyltransferase superfamily. RNA methyltransferase RsmG family.

The protein localises to the cytoplasm. Functionally, specifically methylates the N7 position of a guanine in 16S rRNA. This is Ribosomal RNA small subunit methyltransferase G from Lactococcus lactis subsp. lactis (strain IL1403) (Streptococcus lactis).